We begin with the raw amino-acid sequence, 688 residues long: Glycine--tRNA ligase beta subunit (688 aa).

This sequence belongs to the class-II aminoacyl-tRNA synthetase family. Tetramer of two alpha and two beta subunits.

The protein resides in the cytoplasm. It catalyses the reaction tRNA(Gly) + glycine + ATP = glycyl-tRNA(Gly) + AMP + diphosphate. This Listeria monocytogenes serotype 4b (strain CLIP80459) protein is Glycine--tRNA ligase beta subunit.